We begin with the raw amino-acid sequence, 356 residues long: HTH-type transcriptional regulator AglR (356 aa).

One can recognise an HTH lacI-type domain in the interval 1 to 57 (MPVNLKQLAELLGLSQTTVSRALNGYPEVNAETRARVLEAVRETGYRPNRAAQRLAT). The H-T-H motif DNA-binding region spans 5–24 (LKQLAELLGLSQTTVSRALN). The segment at 337 to 356 (TGPAPDRSPLPNPSPQVGGA) is disordered.

Probable regulatory protein for the binding-protein-dependent transport system for alpha-glucosides such as sucrose, maltose and trehalose. This Rhizobium meliloti (strain 1021) (Ensifer meliloti) protein is HTH-type transcriptional regulator AglR (aglR).